The sequence spans 333 residues: GDP-mannose transporter GONST1 (333 aa).

9 helical membrane-spanning segments follow: residues 33–55, 62–84, 99–121, 153–170, 174–196, 216–238, 253–275, 282–304, and 308–325; these read ALLS…KFVL, AGIF…LSLM, VWFP…LKYI, VWAA…GGIT, FNAV…SLTL, SMVL…FFNE, FWMV…MWFL, TYSL…LFNV, and LQNS…VVFA.

It belongs to the nucleotide-sugar transporter family. GDP-Mannose:GMP antiporter (GMA) (TC 2.A.7.13) subfamily.

Its subcellular location is the golgi apparatus membrane. Involved in the import of GDP-mannose from the cytoplasm into the Golgi lumen. Required for the luminal synthesis of a variety of plant cell surface components. Is required for the correct mannosylation of the glycosylinositol phosphoceramides (GIPC). Can indifferently transport GDP-mannose, GDP-Glucose, GDP-Fucose or GDP-Galactose in vitro. The chain is GDP-mannose transporter GONST1 from Arabidopsis thaliana (Mouse-ear cress).